The following is a 430-amino-acid chain: Proteasome-activating nucleotidase (430 aa).

Positions 9–89 (TELKKEKKAF…LRRELDRMRV (81 aa)) form a coiled coil. ATP is bound by residues 214–219 (GTGKTL) and H353. Residues 428–430 (LYR) form a docks into pockets in the proteasome alpha-ring to cause gate opening region.

This sequence belongs to the AAA ATPase family. As to quaternary structure, homohexamer. The hexameric complex has a two-ring architecture resembling a top hat that caps the 20S proteasome core at one or both ends. Alone, can form a complex composed of two stacked hexameric rings in vitro. Upon ATP-binding, the C-terminus of PAN interacts with the alpha-rings of the proteasome core by binding to the intersubunit pockets.

It localises to the cytoplasm. Its activity is regulated as follows. ATPase activity is inhibited by EDTA, N-ethylmaleimide (NEM) and p-chloromercuriphenyl-sulfonic acid (PCMS) in vitro. Its function is as follows. ATPase which is responsible for recognizing, binding, unfolding and translocation of substrate proteins into the archaeal 20S proteasome core particle. Is essential for opening the gate of the 20S proteasome via an interaction with its C-terminus, thereby allowing substrate entry and access to the site of proteolysis. Thus, the C-termini of the proteasomal ATPase function like a 'key in a lock' to induce gate opening and therefore regulate proteolysis. Unfolding activity requires energy from ATP hydrolysis, whereas ATP binding alone promotes ATPase-20S proteasome association which triggers gate opening, and supports translocation of unfolded substrates. In addition to ATP, is able to cleave other nucleotide triphosphates such as CTP, GTP and UTP, but hydrolysis of these other nucleotides is less effective in promoting proteolysis than ATP. Moreover, PAN by itself can function as a chaperone in vitro. This chain is Proteasome-activating nucleotidase, found in Methanocaldococcus jannaschii (strain ATCC 43067 / DSM 2661 / JAL-1 / JCM 10045 / NBRC 100440) (Methanococcus jannaschii).